We begin with the raw amino-acid sequence, 350 residues long: Serine-threonine kinase receptor-associated protein (350 aa).

WD repeat units lie at residues 12–56 (GHTR…GTFL), 57–96 (GHKG…ELMT), 98–137 (AHKH…AEPK), 141–179 (GHTS…EVKS), 180–212 (LNFN…HSAV), 221–262 (EAPA…ESYK), and 263–302 (GHFG…TYGL). Residues S312, S335, and S338 each carry the phosphoserine modification. Positions 326–350 (AEEELEEIASENSDSIYSSTPEVKA) are disordered. Positions 337–350 (NSDSIYSSTPEVKA) are enriched in polar residues. The residue at position 342 (Y342) is a Phosphotyrosine.

Belongs to the WD repeat STRAP family. In terms of assembly, part of the core SMN complex that contains SMN1, GEMIN2/SIP1, DDX20/GEMIN3, GEMIN4, GEMIN5, GEMIN6, GEMIN7, GEMIN8 and STRAP/UNRIP. Part of the SMN-Sm complex that contains SMN1, GEMIN2/SIP1, DDX20/GEMIN3, GEMIN4, GEMIN5, GEMIN6, GEMIN7, GEMIN8, STRAP/UNRIP and the Sm proteins SNRPB, SNRPD1, SNRPD2, SNRPD3, SNRPE, SNRPF and SNRPG. Interacts directly with GEMIN6 and GEMIN7. Associates with the SMN complex in the cytoplasm but not in the nucleus. Also interacts with CSDE1/UNR and MAWBP. Interacts with PDPK1. Interacts with TRIM48.

The protein localises to the cytoplasm. It is found in the nucleus. The SMN complex catalyzes the assembly of small nuclear ribonucleoproteins (snRNPs), the building blocks of the spliceosome, and thereby plays an important role in the splicing of cellular pre-mRNAs. Most spliceosomal snRNPs contain a common set of Sm proteins SNRPB, SNRPD1, SNRPD2, SNRPD3, SNRPE, SNRPF and SNRPG that assemble in a heptameric protein ring on the Sm site of the small nuclear RNA to form the core snRNP (Sm core). In the cytosol, the Sm proteins SNRPD1, SNRPD2, SNRPE, SNRPF and SNRPG are trapped in an inactive 6S pICln-Sm complex by the chaperone CLNS1A that controls the assembly of the core snRNP. To assemble core snRNPs, the SMN complex accepts the trapped 5Sm proteins from CLNS1A forming an intermediate. Binding of snRNA inside 5Sm triggers eviction of the SMN complex, thereby allowing binding of SNRPD3 and SNRPB to complete assembly of the core snRNP. STRAP plays a role in the cellular distribution of the SMN complex. Negatively regulates TGF-beta signaling but positively regulates the PDPK1 kinase activity by enhancing its autophosphorylation and by significantly reducing the association of PDPK1 with 14-3-3 protein. The protein is Serine-threonine kinase receptor-associated protein (Strap) of Mus musculus (Mouse).